The chain runs to 576 residues: Sulfite reductase [NADPH] hemoprotein beta-component (576 aa).

Residues Cys439, Cys445, Cys485, and Cys489 each contribute to the [4Fe-4S] cluster site. Cys489 contributes to the siroheme binding site.

It belongs to the nitrite and sulfite reductase 4Fe-4S domain family. In terms of assembly, alpha(8)-beta(8). The alpha component is a flavoprotein, the beta component is a hemoprotein. The cofactor is siroheme. [4Fe-4S] cluster serves as cofactor.

It catalyses the reaction hydrogen sulfide + 3 NADP(+) + 3 H2O = sulfite + 3 NADPH + 4 H(+). The protein operates within sulfur metabolism; hydrogen sulfide biosynthesis; hydrogen sulfide from sulfite (NADPH route): step 1/1. Functionally, component of the sulfite reductase complex that catalyzes the 6-electron reduction of sulfite to sulfide. This is one of several activities required for the biosynthesis of L-cysteine from sulfate. This Aliivibrio salmonicida (strain LFI1238) (Vibrio salmonicida (strain LFI1238)) protein is Sulfite reductase [NADPH] hemoprotein beta-component.